Here is a 122-residue protein sequence, read N- to C-terminus: Glycine cleavage system H protein (122 aa).

Residues 22 to 103 (IGIIGISDYA…AFGSWFFKVE (82 aa)) enclose the Lipoyl-binding domain. K63 is modified (N6-lipoyllysine).

It belongs to the GcvH family. The glycine cleavage system is composed of four proteins: P, T, L and H. Requires (R)-lipoate as cofactor.

Its function is as follows. The glycine cleavage system catalyzes the degradation of glycine. The H protein shuttles the methylamine group of glycine from the P protein to the T protein. This Treponema denticola (strain ATCC 35405 / DSM 14222 / CIP 103919 / JCM 8153 / KCTC 15104) protein is Glycine cleavage system H protein.